Here is a 278-residue protein sequence, read N- to C-terminus: MSDFSGSGWLAEIFLRYELKRGVTRLTDKQHIGPLMVQRPFYPEQGIAHTYLLHPPGGVVGGDKLLINIDVQPHAHALLTTPGATKFYRSAGGVARQVQTLTVAPNGFLEWLPQENIFFPEAQVRLETHVRIASSSKFISWEIQCLGRPVLNEQFDNGDIRGRLQFYIDDKLTLAESIFIEGSQKQSAVMREFPMVGSLYIYPASDELKAELHESLAVFFSTEVRPLEYGLTDVDGILVLRLLGSQTEPMMACFAHIWQATRQYWLGYCPEPPRIWAT.

Belongs to the UreD family. As to quaternary structure, ureD, UreF and UreG form a complex that acts as a GTP-hydrolysis-dependent molecular chaperone, activating the urease apoprotein by helping to assemble the nickel containing metallocenter of UreC. The UreE protein probably delivers the nickel.

Its subcellular location is the cytoplasm. In terms of biological role, required for maturation of urease via the functional incorporation of the urease nickel metallocenter. The sequence is that of Urease accessory protein UreD from Escherichia coli.